A 357-amino-acid chain; its full sequence is Protein RecA (357 aa).

67–74 (GPESSGKT) is an ATP binding site. Positions 334–357 (ELKPAAAGNSHDEDELAGEGKEEF) are disordered.

Belongs to the RecA family.

The protein localises to the cytoplasm. Its function is as follows. Can catalyze the hydrolysis of ATP in the presence of single-stranded DNA, the ATP-dependent uptake of single-stranded DNA by duplex DNA, and the ATP-dependent hybridization of homologous single-stranded DNAs. It interacts with LexA causing its activation and leading to its autocatalytic cleavage. In Pectobacterium atrosepticum (strain SCRI 1043 / ATCC BAA-672) (Erwinia carotovora subsp. atroseptica), this protein is Protein RecA.